We begin with the raw amino-acid sequence, 508 residues long: Steroid 17-alpha-hydroxylase/17,20 lyase (508 aa).

Residue asparagine 202 participates in substrate binding. Cysteine 442 is a heme binding site.

The protein belongs to the cytochrome P450 family. Heme is required as a cofactor.

Its subcellular location is the endoplasmic reticulum membrane. The protein localises to the microsome membrane. The catalysed reaction is a C21-steroid + reduced [NADPH--hemoprotein reductase] + O2 = a 17alpha-hydroxy-C21-steroid + oxidized [NADPH--hemoprotein reductase] + H2O + H(+). It carries out the reaction progesterone + reduced [NADPH--hemoprotein reductase] + O2 = 17alpha-hydroxyprogesterone + oxidized [NADPH--hemoprotein reductase] + H2O + H(+). It catalyses the reaction pregnenolone + reduced [NADPH--hemoprotein reductase] + O2 = 17alpha-hydroxypregnenolone + oxidized [NADPH--hemoprotein reductase] + H2O + H(+). The enzyme catalyses 17alpha-hydroxyprogesterone + reduced [NADPH--hemoprotein reductase] + O2 = androst-4-ene-3,17-dione + acetate + oxidized [NADPH--hemoprotein reductase] + H2O + 2 H(+). The catalysed reaction is 17alpha-hydroxyprogesterone + reduced [NADPH--hemoprotein reductase] + O2 = 16alpha,17alpha-dihydroxyprogesterone + oxidized [NADPH--hemoprotein reductase] + H2O + H(+). It carries out the reaction 16alpha,17alpha-dihydroxyprogesterone + reduced [NADPH--hemoprotein reductase] + O2 = 6beta,16alpha,17alpha-trihydroxyprogesterone + oxidized [NADPH--hemoprotein reductase] + H2O + H(+). It catalyses the reaction 17alpha-hydroxypregnenolone + reduced [NADPH--hemoprotein reductase] + O2 = 3beta-hydroxyandrost-5-en-17-one + acetate + oxidized [NADPH--hemoprotein reductase] + H2O + 2 H(+). The enzyme catalyses 16alpha,17alpha-dihydroxypregnenolone + reduced [NADPH--hemoprotein reductase] + O2 = 3beta,16alpha-dihydroxy-androst-5-en-17-one + acetate + oxidized [NADPH--hemoprotein reductase] + H2O + 2 H(+). The catalysed reaction is 3beta-hydroxyandrost-5-en-17-one + reduced [NADPH--hemoprotein reductase] + O2 = 3beta,16alpha-dihydroxy-androst-5-en-17-one + oxidized [NADPH--hemoprotein reductase] + H2O + H(+). It carries out the reaction androst-4-ene-3,17-dione + reduced [NADPH--hemoprotein reductase] + O2 = 16alpha-hydroxyandrost-4-ene-3,17-dione + oxidized [NADPH--hemoprotein reductase] + H2O + H(+). Its pathway is steroid hormone biosynthesis. The protein operates within steroid biosynthesis; glucocorticoid biosynthesis. With respect to regulation, regulated predominantly by intracellular cAMP levels. The 17,20-lyase activity is stimulated by cytochrome b5, which acts as an allosteric effector increasing the Vmax of the lyase activity. Functionally, a cytochrome P450 monooxygenase involved in corticoid and androgen biosynthesis. Catalyzes 17-alpha hydroxylation of C21 steroids, which is common for both pathways. A second oxidative step, required only for androgen synthesis, involves an acyl-carbon cleavage. The 17-alpha hydroxy intermediates, as part of adrenal glucocorticoids biosynthesis pathway, are precursors of cortisol. Hydroxylates steroid hormones, pregnenolone and progesterone to form 17-alpha hydroxy metabolites, followed by the cleavage of the C17-C20 bond to form C19 steroids, dehydroepiandrosterone (DHEA) and androstenedione. Has 16-alpha hydroxylase activity. Catalyzes 16-alpha hydroxylation of 17-alpha hydroxy pregnenolone, followed by the cleavage of the C17-C20 bond to form 16-alpha-hydroxy DHEA. Also 16-alpha hydroxylates androgens, relevant for estriol synthesis. Mechanistically, uses molecular oxygen inserting one oxygen atom into a substrate, and reducing the second into a water molecule, with two electrons provided by NADPH via cytochrome P450 reductase (CPR; NADPH-ferrihemoprotein reductase). This chain is Steroid 17-alpha-hydroxylase/17,20 lyase (CYP17A1), found in Felis catus (Cat).